We begin with the raw amino-acid sequence, 502 residues long: Cytochrome P450 71A1 (502 aa).

A helical membrane pass occupies residues 7–21; the sequence is LLFLAIALTFFLLKL. Heme is bound at residue C443.

The protein belongs to the cytochrome P450 family. The cofactor is heme. As to expression, mesocarp.

The protein resides in the microsome membrane. It localises to the endoplasmic reticulum membrane. Its function is as follows. Involved in the metabolism of compounds associated with the development of flavor in the ripening fruit process, possibly by acting as trans-cinnamic acid 4-hydrolase. This is Cytochrome P450 71A1 (CYP71A1) from Persea americana (Avocado).